The sequence spans 151 residues: UPF0178 protein Pfl01_5469 (151 aa).

This sequence belongs to the UPF0178 family.

The chain is UPF0178 protein Pfl01_5469 from Pseudomonas fluorescens (strain Pf0-1).